Here is a 300-residue protein sequence, read N- to C-terminus: 33 kDa chaperonin (300 aa).

Cystine bridges form between Cys-235/Cys-237 and Cys-269/Cys-272.

It belongs to the HSP33 family. In terms of processing, under oxidizing conditions two disulfide bonds are formed involving the reactive cysteines. Under reducing conditions zinc is bound to the reactive cysteines and the protein is inactive.

The protein localises to the cytoplasm. Redox regulated molecular chaperone. Protects both thermally unfolding and oxidatively damaged proteins from irreversible aggregation. Plays an important role in the bacterial defense system toward oxidative stress. The protein is 33 kDa chaperonin of Pseudomonas fluorescens (strain SBW25).